The chain runs to 675 residues: DNA ligase (675 aa).

Residues 35–39, 84–85, and glutamate 118 each bind NAD(+); these read DAVYD and SL. The active-site N6-AMP-lysine intermediate is lysine 120. Positions 141, 178, 295, and 319 each coordinate NAD(+). Residues cysteine 413, cysteine 416, cysteine 431, and cysteine 436 each coordinate Zn(2+). Positions 598–675 constitute a BRCT domain; the sequence is GAIGALTGQT…DEAELKALLS (78 aa).

This sequence belongs to the NAD-dependent DNA ligase family. LigA subfamily. It depends on Mg(2+) as a cofactor. Requires Mn(2+) as cofactor.

It carries out the reaction NAD(+) + (deoxyribonucleotide)n-3'-hydroxyl + 5'-phospho-(deoxyribonucleotide)m = (deoxyribonucleotide)n+m + AMP + beta-nicotinamide D-nucleotide.. Functionally, DNA ligase that catalyzes the formation of phosphodiester linkages between 5'-phosphoryl and 3'-hydroxyl groups in double-stranded DNA using NAD as a coenzyme and as the energy source for the reaction. It is essential for DNA replication and repair of damaged DNA. This chain is DNA ligase, found in Synechococcus sp. (strain RCC307).